The chain runs to 283 residues: Serine/threonine-protein phosphatase Pgam5, mitochondrial (283 aa).

A helical membrane pass occupies residues 7 to 23; the sequence is MYGLPSAAVAVGTALLN.

Belongs to the phosphoglycerate mutase family. BPG-dependent PGAM subfamily. As to quaternary structure, interacts with skn-1.

It localises to the mitochondrion outer membrane. It catalyses the reaction O-phospho-L-seryl-[protein] + H2O = L-seryl-[protein] + phosphate. The catalysed reaction is O-phospho-L-threonyl-[protein] + H2O = L-threonyl-[protein] + phosphate. Its function is as follows. Displays phosphatase activity for serine/threonine residues. Has apparently no phosphoglycerate mutase activity. The protein is Serine/threonine-protein phosphatase Pgam5, mitochondrial (pgam-5) of Caenorhabditis briggsae.